The sequence spans 484 residues: Glutamyl-tRNA(Gln) amidotransferase subunit A (484 aa).

Catalysis depends on charge relay system residues lysine 76 and serine 151. Serine 175 functions as the Acyl-ester intermediate in the catalytic mechanism.

This sequence belongs to the amidase family. GatA subfamily. As to quaternary structure, heterotrimer of A, B and C subunits.

It catalyses the reaction L-glutamyl-tRNA(Gln) + L-glutamine + ATP + H2O = L-glutaminyl-tRNA(Gln) + L-glutamate + ADP + phosphate + H(+). In terms of biological role, allows the formation of correctly charged Gln-tRNA(Gln) through the transamidation of misacylated Glu-tRNA(Gln) in organisms which lack glutaminyl-tRNA synthetase. The reaction takes place in the presence of glutamine and ATP through an activated gamma-phospho-Glu-tRNA(Gln). The polypeptide is Glutamyl-tRNA(Gln) amidotransferase subunit A (Halorhodospira halophila (strain DSM 244 / SL1) (Ectothiorhodospira halophila (strain DSM 244 / SL1))).